Reading from the N-terminus, the 468-residue chain is 3-isopropylmalate dehydratase large subunit 2 (468 aa).

3 residues coordinate [4Fe-4S] cluster: C349, C409, and C412.

This sequence belongs to the aconitase/IPM isomerase family. LeuC type 1 subfamily. As to quaternary structure, heterodimer of LeuC and LeuD. [4Fe-4S] cluster is required as a cofactor.

It carries out the reaction (2R,3S)-3-isopropylmalate = (2S)-2-isopropylmalate. It participates in amino-acid biosynthesis; L-leucine biosynthesis; L-leucine from 3-methyl-2-oxobutanoate: step 2/4. Catalyzes the isomerization between 2-isopropylmalate and 3-isopropylmalate, via the formation of 2-isopropylmaleate. This is 3-isopropylmalate dehydratase large subunit 2 from Bradyrhizobium diazoefficiens (strain JCM 10833 / BCRC 13528 / IAM 13628 / NBRC 14792 / USDA 110).